The sequence spans 1170 residues: PAN2-PAN3 deadenylation complex catalytic subunit PAN2 (1170 aa).

WD repeat units lie at residues 104-144 and 280-319; these read ENMK…IIKQ and NISSYVKLFEIAPSGEALVIGDADCNIHLWGSPTKIHFTD. The interval 319–458 is linker; it reads DMAIPIELPE…DPNEIESLKP (140 aa). Residues 399-459 form a disordered region; sequence RRNQVEDTRN…PNEIESLKPE (61 aa). Positions 443–452 are enriched in acidic residues; that stretch reads VDQEPEDPNE. Residues 459–846 enclose the USP domain; it reads EAPPLYRNLE…MPAVLLFQIK (388 aa). Residues 894-1067 enclose the Exonuclease domain; sequence VALDTEFVSL…EDARTALKLY (174 aa). Residues Asp897, Glu899, Asp1006, and Asp1059 each contribute to the a divalent metal cation site. Residues 1094-1170 form a disordered region; sequence NFKPPRREDR…PSKASSPLPK (77 aa). The segment covering 1098 to 1108 has biased composition (basic and acidic residues); sequence PRREDREKELQ. The segment covering 1109–1119 has biased composition (polar residues); that stretch reads RQSTPPNSTAP.

It belongs to the peptidase C19 family. PAN2 subfamily. Forms a heterotrimer with an asymmetric homodimer of the regulatory subunit PAN3 to form the poly(A)-nuclease (PAN) deadenylation complex. It depends on a divalent metal cation as a cofactor.

The protein localises to the cytoplasm. The catalysed reaction is Exonucleolytic cleavage of poly(A) to 5'-AMP.. Its activity is regulated as follows. Positively regulated by the regulatory subunit PAN3. In terms of biological role, catalytic subunit of the poly(A)-nuclease (PAN) deadenylation complex, one of two cytoplasmic mRNA deadenylases involved in mRNA turnover. PAN specifically shortens poly(A) tails of RNA and the activity is stimulated by poly(A)-binding protein PAB1. PAN deadenylation is followed by rapid degradation of the shortened mRNA tails by the CCR4-NOT complex. Deadenylated mRNAs are then degraded by two alternative mechanisms, namely exosome-mediated 3'-5' exonucleolytic degradation, or deadenylation-dependent mRNA decaping and subsequent 5'-3' exonucleolytic degradation by XRN1. May also be involved in post-transcriptional maturation of mRNA poly(A) tails. This is PAN2-PAN3 deadenylation complex catalytic subunit PAN2 from Chaetomium thermophilum (strain DSM 1495 / CBS 144.50 / IMI 039719) (Thermochaetoides thermophila).